The following is a 275-amino-acid chain: 2-dehydro-3-deoxyphosphooctonate aldolase (275 aa).

It belongs to the KdsA family.

Its subcellular location is the cytoplasm. It carries out the reaction D-arabinose 5-phosphate + phosphoenolpyruvate + H2O = 3-deoxy-alpha-D-manno-2-octulosonate-8-phosphate + phosphate. It functions in the pathway carbohydrate biosynthesis; 3-deoxy-D-manno-octulosonate biosynthesis; 3-deoxy-D-manno-octulosonate from D-ribulose 5-phosphate: step 2/3. It participates in bacterial outer membrane biogenesis; lipopolysaccharide biosynthesis. In Francisella philomiragia subsp. philomiragia (strain ATCC 25017 / CCUG 19701 / FSC 153 / O#319-036), this protein is 2-dehydro-3-deoxyphosphooctonate aldolase.